We begin with the raw amino-acid sequence, 92 residues long: Large ribosomal subunit protein eL37 (92 aa).

Positions 19, 22, 34, and 37 each coordinate Zn(2+). The C4-type zinc finger occupies C19–C37. Residues S50–H92 are disordered.

It belongs to the eukaryotic ribosomal protein eL37 family. Requires Zn(2+) as cofactor.

In terms of biological role, binds to the 23S rRNA. This is Large ribosomal subunit protein eL37 (rpl37) from Emericella nidulans (strain FGSC A4 / ATCC 38163 / CBS 112.46 / NRRL 194 / M139) (Aspergillus nidulans).